A 527-amino-acid chain; its full sequence is Protein disulfide-isomerase A2 (527 aa).

A signal peptide spans 1 to 20 (MDKQLLPVLLLLLGVSGSWG). The disordered stretch occupies residues 20 to 41 (GQGEEPGGPSEVLPEEPTGEEV). The region spanning 29–155 (SEVLPEEPTG…IAEWLRRRVG (127 aa)) is the Thioredoxin 1 domain. Active-site nucleophile residues include Cys-74 and Cys-77. A disulfide bridge connects residues Cys-74 and Cys-77. Residues Asn-130 and Asn-287 are each glycosylated (N-linked (GlcNAc...) asparagine). The Thioredoxin 2 domain occupies 355–499 (VIAITAASVA…FSKFLDSGGH (145 aa)). Active-site nucleophile residues include Cys-421 and Cys-424. An intrachain disulfide couples Cys-421 to Cys-424. The segment at 495–527 (DSGGHLPKEEPKEPAASAPEAQANSTLGPKEEL) is disordered. N-linked (GlcNAc...) asparagine glycosylation occurs at Asn-518. Residues 524–527 (KEEL) carry the Prevents secretion from ER motif.

The protein belongs to the protein disulfide isomerase family. Part of a large chaperone multiprotein complex comprising DNAJB11, HSP90B1, HSPA5, HYOU, PDIA2, PDIA4, PDIA6, PPIB, SDF2L1, UGGT1 and very small amounts of ERP29, but not, or at very low levels, CALR nor CANX. Post-translationally, glycosylated. As to expression, highly expressed in pancreas.

The protein localises to the endoplasmic reticulum lumen. The catalysed reaction is Catalyzes the rearrangement of -S-S- bonds in proteins.. Functionally, acts as an intracellular estrogen-binding protein. May be involved in modulating cellular levels and biological functions of estrogens in the pancreas. May act as a chaperone that inhibits aggregation of misfolded proteins. In Mus musculus (Mouse), this protein is Protein disulfide-isomerase A2.